The sequence spans 199 residues: Glycerol-3-phosphate acyltransferase (199 aa).

5 consecutive transmembrane segments (helical) span residues 3 to 23 (AAVW…GVLV), 50 to 70 (WGPA…AVLV), 78 to 98 (DWML…SVFL), 113 to 133 (LLFL…SVIL), and 154 to 174 (LALG…LLIF).

The protein belongs to the PlsY family. As to quaternary structure, probably interacts with PlsX.

The protein resides in the cell inner membrane. The enzyme catalyses an acyl phosphate + sn-glycerol 3-phosphate = a 1-acyl-sn-glycero-3-phosphate + phosphate. It participates in lipid metabolism; phospholipid metabolism. In terms of biological role, catalyzes the transfer of an acyl group from acyl-phosphate (acyl-PO(4)) to glycerol-3-phosphate (G3P) to form lysophosphatidic acid (LPA). This enzyme utilizes acyl-phosphate as fatty acyl donor, but not acyl-CoA or acyl-ACP. The protein is Glycerol-3-phosphate acyltransferase of Thermus thermophilus (strain ATCC 27634 / DSM 579 / HB8).